A 692-amino-acid polypeptide reads, in one-letter code: Elongation factor G (692 aa).

A tr-type G domain is found at 8–283 (QDLRNIGIVA…AVVDYLPSPL (276 aa)). Residues 17 to 24 (AHIDAGKT), 81 to 85 (DTPGH), and 135 to 138 (NKLD) each bind GTP.

Belongs to the TRAFAC class translation factor GTPase superfamily. Classic translation factor GTPase family. EF-G/EF-2 subfamily.

It is found in the cytoplasm. In terms of biological role, catalyzes the GTP-dependent ribosomal translocation step during translation elongation. During this step, the ribosome changes from the pre-translocational (PRE) to the post-translocational (POST) state as the newly formed A-site-bound peptidyl-tRNA and P-site-bound deacylated tRNA move to the P and E sites, respectively. Catalyzes the coordinated movement of the two tRNA molecules, the mRNA and conformational changes in the ribosome. The protein is Elongation factor G of Hydrogenobaculum sp. (strain Y04AAS1).